Here is a 378-residue protein sequence, read N- to C-terminus: Spermidine/putrescine import ATP-binding protein PotA (378 aa).

The ABC transporter domain maps to 18–248 (VQLAGIRKCF…PKNLFVAGFI (231 aa)). Residue 50–57 (GPSGCGKT) coordinates ATP.

Belongs to the ABC transporter superfamily. Spermidine/putrescine importer (TC 3.A.1.11.1) family. In terms of assembly, the complex is composed of two ATP-binding proteins (PotA), two transmembrane proteins (PotB and PotC) and a solute-binding protein (PotD).

The protein resides in the cell inner membrane. The enzyme catalyses ATP + H2O + polyamine-[polyamine-binding protein]Side 1 = ADP + phosphate + polyamineSide 2 + [polyamine-binding protein]Side 1.. Its function is as follows. Part of the ABC transporter complex PotABCD involved in spermidine/putrescine import. Responsible for energy coupling to the transport system. The chain is Spermidine/putrescine import ATP-binding protein PotA from Shigella dysenteriae serotype 1 (strain Sd197).